Consider the following 92-residue polypeptide: MARSLKKNPFVANHLLRKINMLNTKAEKEIIVTWSRASTIIPTMIGHTIAVHNGKEHLPIYITDRMVGHKLGEFAPTLNFRGHAKNDNRSRR.

It belongs to the universal ribosomal protein uS19 family.

It localises to the plastid. Its subcellular location is the chloroplast. In terms of biological role, protein S19 forms a complex with S13 that binds strongly to the 16S ribosomal RNA. This is Small ribosomal subunit protein uS19c from Morus indica (Mulberry).